A 457-amino-acid chain; its full sequence is UDP-N-acetylmuramate--L-alanine ligase (457 aa).

Glycine 112–threonine 118 contributes to the ATP binding site.

It belongs to the MurCDEF family.

It localises to the cytoplasm. The enzyme catalyses UDP-N-acetyl-alpha-D-muramate + L-alanine + ATP = UDP-N-acetyl-alpha-D-muramoyl-L-alanine + ADP + phosphate + H(+). The protein operates within cell wall biogenesis; peptidoglycan biosynthesis. Functionally, cell wall formation. The polypeptide is UDP-N-acetylmuramate--L-alanine ligase (Solidesulfovibrio magneticus (strain ATCC 700980 / DSM 13731 / RS-1) (Desulfovibrio magneticus)).